Consider the following 224-residue polypeptide: Putative endoglucanase X (224 aa).

A disordered region spans residues 147 to 168; sequence QTQPTPSPSPTPTDSPLVKKGD. Residues 162-224 form the Dockerin domain; the sequence is PLVKKGDVNL…SILKRILLRN (63 aa).

The enzyme catalyses Endohydrolysis of (1-&gt;4)-beta-D-glucosidic linkages in cellulose, lichenin and cereal beta-D-glucans.. This enzyme catalyzes the endohydrolysis of 1,4-beta-glucosidic linkages in cellulose, lichenin and cereal beta-D-glucans. This is Putative endoglucanase X (celX) from Acetivibrio thermocellus (Hungateiclostridium thermocellum).